The sequence spans 201 residues: MLLPYLNKDLIEAGCDEAGRGCLAGSVYAAAVILPVDFKNELLNDSKQLTEHQRYALREIVEREALAWAVGVVTPEEIDEINILNASFLAMHRAVDQLKIRPQHLLIDGNRFKKYQDLPHTTVVKGDGKYLSIAAASILAKTYRDDYMNELHKEYPFYDWNSNKGYPTKKHRAAIREHGTTPYHRMTFNLLGTDPQLEIPF.

Residues leucine 10–proline 200 enclose the RNase H type-2 domain. Residues aspartate 16, glutamate 17, and aspartate 108 each contribute to the a divalent metal cation site.

The protein belongs to the RNase HII family. Mn(2+) serves as cofactor. Mg(2+) is required as a cofactor.

Its subcellular location is the cytoplasm. It carries out the reaction Endonucleolytic cleavage to 5'-phosphomonoester.. Endonuclease that specifically degrades the RNA of RNA-DNA hybrids. This is Ribonuclease HII from Phocaeicola vulgatus (strain ATCC 8482 / DSM 1447 / JCM 5826 / CCUG 4940 / NBRC 14291 / NCTC 11154) (Bacteroides vulgatus).